Reading from the N-terminus, the 693-residue chain is Guanyl-specific ribonuclease pgl-3 (693 aa).

Positions 205–447 (KKLMIEGPKI…VNRIIESLEK (243 aa)) are involved in dimerization. H437 acts as the Proton acceptor in catalysis. Disordered stretches follow at residues 445-468 (LEKS…GPTT), 523-591 (AEKN…DATP), and 620-693 (SSNG…RGGS). Residues 447 to 468 (KSSSSEPSATAKQTTTSNGPTT) are compositionally biased toward low complexity. 2 stretches are compositionally biased toward polar residues: residues 528-548 (NTPS…SPTK) and 569-580 (ITKVSPQPQERT). The interval 581 to 614 (GTAWGSGDATPVPLATPVNEYKVSGFGAAPVASG) is required for interaction with sepa-1. Gly residues-rich tracts occupy residues 625–634 (SGRGSYGGGR), 641–660 (RGAY…SRGY), and 668–693 (RGSY…RGGS). Residues 633 to 693 (GRGGDRGGRG…GFFGGSRGGS (61 aa)) are RNA-binding RGG-box.

In terms of assembly, may form a homodimer. Interacts with pgl-1 and pgl-2; this association is not required for P-granule localization of either pgl-1 or pgl-2. Interacts with sepa-1; the interaction is enhanced in the presence of RNA. Interacts with prmt-1; the interaction is direct. In terms of processing, methylated at arginine residues in the RNA-binding RGG-box by prmt-1. Methylation promotes P-granule degradation by autophagy. In terms of tissue distribution, highly expressed in the germline. Expressed in most somatic cells.

The protein localises to the cytoplasmic granule. The enzyme catalyses [RNA] containing guanosine + H2O = an [RNA fragment]-3'-guanosine-3'-phosphate + a 5'-hydroxy-ribonucleotide-3'-[RNA fragment].. Guanyl-specific endoribonuclease which cleaves the phosphodiester bond in single-stranded RNA between the 3'-guanylic residue and the 5'-OH residue of adjacent nucleotide, resulting in the formation of a corresponding 2',3'-cyclic phosphate intermediate. P-granule component involved in germline development. Together with the P-granule component pgl-1, is involved in the formation of P-granules. Together with pgl-1, probably recruits other granule components such as pos-1, mex-3 and glh-1, and RNA to P-granules. In vitro, binds mRNA; this interaction is required for the formation of liquid-like droplets that resemble P-granules. Most likely recruits pgl-1 into P-granules during autophagy. Associates with adapters such as sepa-1 and is required for the accumulation and degradation of P-granules by autophagy in somatic cells. This ensures exclusive localization of the P-granules in germ cells. In addition, may act redundantly with pgl-1 to protect germ cells from excessive germline apoptosis during normal oogenesis and development of the two gonadal arms. This may in part be through regulating the localization of sir-2.1 which is involved in germ cell apoptosis. May protect somatic cells from excessive apoptosis during normal development. The chain is Guanyl-specific ribonuclease pgl-3 from Caenorhabditis elegans.